The following is a 242-amino-acid chain: Biosynthetic peptidoglycan transglycosylase (242 aa).

The helical transmembrane segment at 12-32 (LLLWLIALSVLLVLLLRWVPP) threads the bilayer.

This sequence belongs to the glycosyltransferase 51 family.

It localises to the cell inner membrane. It catalyses the reaction [GlcNAc-(1-&gt;4)-Mur2Ac(oyl-L-Ala-gamma-D-Glu-L-Lys-D-Ala-D-Ala)](n)-di-trans,octa-cis-undecaprenyl diphosphate + beta-D-GlcNAc-(1-&gt;4)-Mur2Ac(oyl-L-Ala-gamma-D-Glu-L-Lys-D-Ala-D-Ala)-di-trans,octa-cis-undecaprenyl diphosphate = [GlcNAc-(1-&gt;4)-Mur2Ac(oyl-L-Ala-gamma-D-Glu-L-Lys-D-Ala-D-Ala)](n+1)-di-trans,octa-cis-undecaprenyl diphosphate + di-trans,octa-cis-undecaprenyl diphosphate + H(+). The protein operates within cell wall biogenesis; peptidoglycan biosynthesis. Functionally, peptidoglycan polymerase that catalyzes glycan chain elongation from lipid-linked precursors. The polypeptide is Biosynthetic peptidoglycan transglycosylase (Stutzerimonas stutzeri (strain A1501) (Pseudomonas stutzeri)).